The primary structure comprises 195 residues: Small ribosomal subunit protein uS4c (195 aa).

An S4 RNA-binding domain is found at 82–143 (MRLDNILFRL…KQRSKALIQN (62 aa)).

The protein belongs to the universal ribosomal protein uS4 family. In terms of assembly, part of the 30S ribosomal subunit. Contacts protein S5. The interaction surface between S4 and S5 is involved in control of translational fidelity.

The protein resides in the plastid. Its subcellular location is the chloroplast. Its function is as follows. One of the primary rRNA binding proteins, it binds directly to 16S rRNA where it nucleates assembly of the body of the 30S subunit. Functionally, with S5 and S12 plays an important role in translational accuracy. The chain is Small ribosomal subunit protein uS4c (rps4) from Gladiolus murielae (Abyssinian gladiolus).